A 454-amino-acid chain; its full sequence is GTPase Der (454 aa).

EngA-type G domains lie at 4-167 (AIVA…SEDK) and 188-363 (LQLA…ASWQ). Residues 10 to 17 (GKPNVGKS), 56 to 60 (DTPGL), 121 to 124 (NKTE), 194 to 201 (GRPNCGKS), 241 to 245 (DTAGV), and 306 to 309 (NKCD) contribute to the GTP site. The KH-like domain maps to 364–450 (KRVTTGTLNQ…PVRLSFVKGK (87 aa)).

It belongs to the TRAFAC class TrmE-Era-EngA-EngB-Septin-like GTPase superfamily. EngA (Der) GTPase family. Associates with the 50S ribosomal subunit.

Functionally, GTPase that plays an essential role in the late steps of ribosome biogenesis. This Orientia tsutsugamushi (strain Boryong) (Rickettsia tsutsugamushi) protein is GTPase Der.